We begin with the raw amino-acid sequence, 323 residues long: o-succinylbenzoate synthase (323 aa).

The Proton donor role is filled by Lys-134. The Mg(2+) site is built by Asp-162, Glu-191, and Asp-214. The active-site Proton acceptor is Lys-236.

Belongs to the mandelate racemase/muconate lactonizing enzyme family. MenC type 1 subfamily. A divalent metal cation serves as cofactor.

The enzyme catalyses (1R,6R)-6-hydroxy-2-succinyl-cyclohexa-2,4-diene-1-carboxylate = 2-succinylbenzoate + H2O. Its pathway is quinol/quinone metabolism; 1,4-dihydroxy-2-naphthoate biosynthesis; 1,4-dihydroxy-2-naphthoate from chorismate: step 4/7. The protein operates within quinol/quinone metabolism; menaquinone biosynthesis. Its function is as follows. Converts 2-succinyl-6-hydroxy-2,4-cyclohexadiene-1-carboxylate (SHCHC) to 2-succinylbenzoate (OSB). The chain is o-succinylbenzoate synthase from Yersinia pseudotuberculosis serotype IB (strain PB1/+).